Consider the following 401-residue polypeptide: tRNA (guanine-N(7)-)-methyltransferase non-catalytic subunit wuho (401 aa).

Positions 45–85 are disordered; that stretch reads KGRPRKYFDADSDSDEEQQNGDEPGTGKNNGGGDTGKKDQD. A compositionally biased stretch (acidic residues) spans 54–64; it reads ADSDSDEEQQN. WD repeat units lie at residues 86–125, 174–213, and 217–255; these read DQTNAIVALDVNEDRSLVAVATGDKSLYLFEVDQDGRTLK, GHMSQVLDVLIDTEEKLIITSDRDEKIRVTCHPDCHNIET, and GHTEFVSHLEFLGPELLLSLSGDKTLRWWNYTSGKELAR.

This sequence belongs to the WD repeat TRM82 family. Forms a heterodimer with the catalytic subunit.

The protein resides in the nucleus. The protein operates within tRNA modification; N(7)-methylguanine-tRNA biosynthesis. In terms of biological role, required for the formation of N(7)-methylguanine at position 46 (m7G46) in tRNA. In the complex, it is required to stabilize and induce conformational changes of the catalytic subunit. The chain is tRNA (guanine-N(7)-)-methyltransferase non-catalytic subunit wuho from Culex quinquefasciatus (Southern house mosquito).